The chain runs to 612 residues: Lipoma-preferred partner (612 aa).

Disordered regions lie at residues 1–118 (MSHP…SSLD) and 132–219 (ECSS…SSRP). Residues 26-40 (THSFGNPSISVSTQQ) show a composition bias toward polar residues. Positions 41-53 (PPKKFAPVVAPKP) are enriched in low complexity. K108 carries the post-translational modification N6-acetyllysine. 2 positions are modified to phosphoserine: S116 and S151. 2 stretches are compositionally biased toward polar residues: residues 143-158 (QSSTGSTASPPVSTPV) and 171-181 (PLTATKKSTLK). Over residues 183 to 193 (QPAPQAGPIPV) the composition is skewed to pro residues. Over residues 209-219 (SYTTASTSSRP) the composition is skewed to polar residues. Phosphotyrosine is present on residues Y244 and Y301. Residues 307–387 (YGGRNDSDPT…LGPSSVAPSF (81 aa)) form a disordered region. Residues 314 to 323 (DPTYGQQGHP) are compositionally biased toward polar residues. Residue K327 forms a Glycyl lysine isopeptide (Lys-Gly) (interchain with G-Cter in SUMO1) linkage. Residue T333 is modified to Phosphothreonine. S375 is modified (phosphoserine). LIM zinc-binding domains lie at 414–473 (GRCA…INTL), 474–534 (EQCN…KFAP), and 535–603 (RCSV…RIRV).

The protein belongs to the zyxin/ajuba family. In terms of assembly, interacts with VASP, with PDZ domains of SCRIB and with ACTN1/alpha-actinin. Expressed in a wide variety of tissues but no or very low expression in brain and peripheral leukocytes.

It localises to the nucleus. The protein localises to the cytoplasm. It is found in the cell junction. Its subcellular location is the cell membrane. Its function is as follows. May play a structural role at sites of cell adhesion in maintaining cell shape and motility. In addition to these structural functions, it may also be implicated in signaling events and activation of gene transcription. May be involved in signal transduction from cell adhesion sites to the nucleus allowing successful integration of signals arising from soluble factors and cell-cell adhesion sites. Also suggested to serve as a scaffold protein upon which distinct protein complexes are assembled in the cytoplasm and in the nucleus. This Homo sapiens (Human) protein is Lipoma-preferred partner (LPP).